We begin with the raw amino-acid sequence, 484 residues long: Acid alpha-amylase (484 aa).

A glycan (N-linked (GlcNAc...) asparagine) is linked at Asn24. The cysteines at positions 30 and 38 are disulfide-linked. Trp83 is a substrate binding site. Asp121 is a binding site for Ca(2+). Residue His122 coordinates substrate. Cys150 and Cys164 are joined by a disulfide. Asn157 is a glycosylation site (N-linked (GlcNAc...) asparagine). Residues Glu162 and Asp175 each coordinate Ca(2+). Residue Asn197 is glycosylated (N-linked (GlcNAc...) asparagine). Residue Arg204 participates in substrate binding. The Ca(2+) site is built by Asp206, Glu210, and Glu230. Asp206 (nucleophile) is an active-site residue. Position 209 to 210 (209 to 210 (LE)) interacts with substrate. The active-site Proton donor is the Glu230. Gly234 is a binding site for substrate. Residues Cys240 and Cys283 are joined by a disulfide bond. Substrate is bound by residues Asp297 and Arg344. Cys440 and Cys475 form a disulfide bridge.

Belongs to the glycosyl hydrolase 13 family. Monomer. It depends on Ca(2+) as a cofactor.

The protein localises to the secreted. The catalysed reaction is Endohydrolysis of (1-&gt;4)-alpha-D-glucosidic linkages in polysaccharides containing three or more (1-&gt;4)-alpha-linked D-glucose units.. In Aspergillus niger, this protein is Acid alpha-amylase.